Here is a 247-residue protein sequence, read N- to C-terminus: MDQIRQLAQWIKEANTIAVLTGAGMSTESGIPDFRSENGLYAQEDNVEYYLSEYYYKKDPVDFWRRFKRMFSLKMMGGFAPNDGHRFLRWLEEMGKTVTILTQNIDGLHTKAGSTNVIELHGTLQTATCPSCGNKYDLSFINRHEVPRCEKCQTIVKPDVVLFGGLVPRMEEAFAAAAASDLLLAMGTSLEVAPVNQIPFYVAAESPATRKVLINKTATRMDGMFDLVIYGGIGKTVASVRKQIQAE.

The region spanning 1 to 247 (MDQIRQLAQW…ASVRKQIQAE (247 aa)) is the Deacetylase sirtuin-type domain. The NAD(+) site is built by A23, T27, F34, R35, Q103, I105, D106, and H121. F34 contacts nicotinamide. Nicotinamide is bound by residues I105 and D106. Catalysis depends on H121, which acts as the Proton acceptor. The Zn(2+) site is built by C129, C132, C149, and C152. NAD(+) contacts are provided by T188, S189, N215, and I233.

It belongs to the sirtuin family. Class U subfamily. Requires Zn(2+) as cofactor.

It localises to the cytoplasm. The enzyme catalyses N(6)-acetyl-L-lysyl-[protein] + NAD(+) + H2O = 2''-O-acetyl-ADP-D-ribose + nicotinamide + L-lysyl-[protein]. NAD-dependent protein deacetylase which modulates the activities of several enzymes which are inactive in their acetylated form. The polypeptide is NAD-dependent protein deacetylase 2 (Geobacillus kaustophilus (strain HTA426)).